The following is a 199-amino-acid chain: MTTLTAQQIACVYAWLAQLFSRELDDEQLTQIASAQMAEWFSLMKSEPPLTAAVNELENRIAALTVRDDARLELAADFCGLFLMTDKQAALPYASAYKQDEQEIKRLLVEAGMVTSGNFNEPADHLAIYLELLSHLHFSLGEGSVPARRIDSLRQKTLTALWEWLPEFAARCRQYDSFGFYAALSQLLLVLVECDHQNR.

Belongs to the TorD/DmsD family. TorD subfamily.

Its subcellular location is the cytoplasm. Functionally, involved in the biogenesis of TorA. Acts on TorA before the insertion of the molybdenum cofactor and, as a result, probably favors a conformation of the apoenzyme that is competent for acquiring the cofactor. This Escherichia coli O7:K1 (strain IAI39 / ExPEC) protein is Chaperone protein TorD.